The chain runs to 615 residues: TANK-binding kinase 1-binding protein 1 (615 aa).

The segment at Met1–Arg279 is homodimerization. The stretch at Tyr48–Ile162 forms a coiled coil. Residue Ser184 is modified to Phosphoserine. Residues Val221–Gln276 adopt a coiled-coil conformation. Residues Asp280–Ser329 are interaction with TBK1 and IKBKE. The disordered stretch occupies residues Gln326 to Gly458. The segment covering Pro345–Ser365 has biased composition (pro residues). 6 positions are modified to phosphoserine: Ser365, Ser372, Ser379, Ser385, Ser400, and Ser415. Residues Pro389–Cys406 show a composition bias toward pro residues. A compositionally biased stretch (pro residues) spans Pro416 to Gly435. Phosphoserine is present on residues Ser504 and Ser534. Residues Ile583–His609 form a UBZ1-type zinc finger. The Zn(2+) site is built by Cys586, Cys589, His605, and His609.

Homodimer. May form a heterodimer with NAP1. Interacts with TKB1 and IKBKE. Weakly interacts with DDX3X. In terms of assembly, (Microbial infection) Interacts with vaccinia virus protein C6. Detected in leukocytes, lung, placenta, small intestine, liver, kidney, spleen, muscle, heart, brain and at low levels in thymus.

In terms of biological role, adapter protein which constitutively binds TBK1 and IKBKE playing a role in antiviral innate immunity. In Homo sapiens (Human), this protein is TANK-binding kinase 1-binding protein 1.